The sequence spans 532 residues: Berberine bridge enzyme-like 23 (532 aa).

The first 22 residues, 1-22 (MRTLEAFALSLFLVFLVKWVNS), serve as a signal peptide directing secretion. A disulfide bridge connects residues C36 and C102. A glycan (N-linked (GlcNAc...) asparagine) is linked at N78. An FAD-binding PCMH-type domain is found at 80 to 256 (TSQKPILIVT…LSWKVKLVRV (177 aa)). A cross-link (6-(S-cysteinyl)-8alpha-(pros-histidyl)-FAD (His-Cys)) is located at residues 117–180 (HDYEGLSYLS…KIHGFPAGTC (64 aa)). N272 and N487 each carry an N-linked (GlcNAc...) asparagine glycan.

Belongs to the oxygen-dependent FAD-linked oxidoreductase family. FAD is required as a cofactor. In terms of processing, the FAD cofactor is bound via a bicovalent 6-S-cysteinyl, 8alpha-N1-histidyl FAD linkage. As to expression, accumulates in cell walls of etiolated hypocotyls.

It localises to the secreted. The protein localises to the cell wall. This is Berberine bridge enzyme-like 23 from Arabidopsis thaliana (Mouse-ear cress).